A 198-amino-acid chain; its full sequence is Imidazoleglycerol-phosphate dehydratase (198 aa).

This sequence belongs to the imidazoleglycerol-phosphate dehydratase family.

It is found in the cytoplasm. The catalysed reaction is D-erythro-1-(imidazol-4-yl)glycerol 3-phosphate = 3-(imidazol-4-yl)-2-oxopropyl phosphate + H2O. Its pathway is amino-acid biosynthesis; L-histidine biosynthesis; L-histidine from 5-phospho-alpha-D-ribose 1-diphosphate: step 6/9. In Agrobacterium fabrum (strain C58 / ATCC 33970) (Agrobacterium tumefaciens (strain C58)), this protein is Imidazoleglycerol-phosphate dehydratase.